The sequence spans 265 residues: Inositol monophosphatase 2 (265 aa).

Residues E65, D86, L88, and D89 each coordinate Mg(2+). E65 provides a ligand contact to substrate. Substrate contacts are provided by residues 88-91 (LDGT), 189-191 (GSC), E208, and D216. D216 lines the Mg(2+) pocket.

It belongs to the inositol monophosphatase superfamily. The cofactor is Mg(2+). Low expression in roots, stems, leaves, flowers and young and mature green fruits. Expressed in the stem/leaf junctions, below the shoot apex and on the abaxial side of the petiole of the first expanded leaflets.

The enzyme catalyses a myo-inositol phosphate + H2O = myo-inositol + phosphate. The protein operates within polyol metabolism; myo-inositol biosynthesis; myo-inositol from D-glucose 6-phosphate: step 2/2. Functionally, responsible for the provision of inositol required for synthesis of phosphatidylinositol and polyphosphoinositides. The chain is Inositol monophosphatase 2 (IMP2) from Solanum lycopersicum (Tomato).